The following is a 349-amino-acid chain: Short-wave-sensitive opsin 1 (349 aa).

Residues 1–34 are Extracellular-facing; that stretch reads MSKMPEEEEFYLFKNISSVGPWDGPQYHIAPVWA. N-linked (GlcNAc...) asparagine glycosylation is present at Asn-15. A helical transmembrane segment spans residues 35–59; it reads FQLQAAFMGIVFLAGLPLNSMVLVA. Residues 60-71 are Cytoplasmic-facing; the sequence is TVRYKKLRHPLN. The chain crosses the membrane as a helical span at residues 72–97; it reads YVLVNVSVGGFLLCIFSVLPVFVNSC. Over 98–111 the chain is Extracellular; sequence NGYFVFGRHVCALE. Cys-108 and Cys-185 are oxidised to a cystine. A helical transmembrane segment spans residues 112 to 131; that stretch reads GFLGTVAGLVTGWSLAFLAF. Over 132–150 the chain is Cytoplasmic; the sequence is ERYIVICKPFGNFRFSSKH. The chain crosses the membrane as a helical span at residues 151–174; it reads ALMVVLTTWTIGIGVSIPPFFGWS. Residues 175 to 200 are Extracellular-facing; it reads RYIAEGLQCSCGPDWYTVGTKYRSEY. A helical transmembrane segment spans residues 201-228; that stretch reads YTWFLFIFCFIVPLSLICFSYAQLLRAL. Over 229–250 the chain is Cytoplasmic; sequence KAVAAQQQESATTQKAEREVSR. A helical membrane pass occupies residues 251 to 274; sequence MVVVMVGSFCVCYVPYAALAMYMV. Over 275 to 282 the chain is Extracellular; it reads NNRNHGLD. The chain crosses the membrane as a helical span at residues 283–307; sequence LRLVSIPAFFSKSSCIYNPIIYCFM. N6-(retinylidene)lysine is present on Lys-294. The Cytoplasmic segment spans residues 308–349; the sequence is NKQFRACIMEMVCGKAMTDESDISSSQKTEVSTVSSSQVGPN.

Belongs to the G-protein coupled receptor 1 family. Opsin subfamily. Phosphorylated on some or all of the serine and threonine residues present in the C-terminal region.

It localises to the cell membrane. The protein localises to the photoreceptor inner segment. Its subcellular location is the cell projection. The protein resides in the cilium. It is found in the photoreceptor outer segment. It localises to the cytoplasm. The protein localises to the perinuclear region. Functionally, visual pigments are the light-absorbing molecules that mediate vision. They consist of an apoprotein, opsin, covalently linked to cis-retinal. Required for the maintenance of cone outer segment organization in the ventral retina, but not essential for the maintenance of functioning cone photoreceptors. Involved in ensuring correct abundance and localization of retinal membrane proteins. May increase spectral sensitivity in dim light. The protein is Short-wave-sensitive opsin 1 (OPN1SW) of Saimiri boliviensis boliviensis (Bolivian squirrel monkey).